Here is a 312-residue protein sequence, read N- to C-terminus: MMVVAALLSWFLLGLFIHYSKKFGWGQPIRQDGPQTHLAKEGTPTAGGVAFVLALLLVFVGLLAFGGIGQANLSREVMILLAALGMGVVGGIDDFLKIRSRKFGGKKELLAREKFPLQVLVALLFAGFAAPLASHQLLPGFMSIGGYPIFDMLFIAFVMVGSVNAFNFTDGLDGLLAGVGMIVLLPLVAVSPIAALMVAVLLGFLWFNAHPARVFMGDMGSHAIGAVAAGAYALYSDVWLLPIAAIIPVAAVLSVVIQVASVRLRKRKVFKMSPIQHHFELSGWPETHVTLRFWVVTGIATALTWWLMGGRP.

The next 9 membrane-spanning stretches (helical) occupy residues 1–21 (MMVVAALLSWFLLGLFIHYSK), 48–68 (GVAFVLALLLVFVGLLAFGGI), 76–96 (EVMILLAALGMGVVGGIDDFL), 115–135 (FPLQVLVALLFAGFAAPLASH), 140–160 (GFMSIGGYPIFDMLFIAFVMV), 165–185 (AFNFTDGLDGLLAGVGMIVLL), 214–234 (VFMGDMGSHAIGAVAAGAYAL), 238–258 (VWLLPIAAIIPVAAVLSVVIQ), and 289–309 (VTLRFWVVTGIATALTWWLMG).

This sequence belongs to the glycosyltransferase 4 family. MraY subfamily. It depends on Mg(2+) as a cofactor.

It localises to the cell membrane. The catalysed reaction is UDP-N-acetyl-alpha-D-muramoyl-L-alanyl-gamma-D-glutamyl-meso-2,6-diaminopimeloyl-D-alanyl-D-alanine + di-trans,octa-cis-undecaprenyl phosphate = di-trans,octa-cis-undecaprenyl diphospho-N-acetyl-alpha-D-muramoyl-L-alanyl-D-glutamyl-meso-2,6-diaminopimeloyl-D-alanyl-D-alanine + UMP. It participates in cell wall biogenesis; peptidoglycan biosynthesis. Its function is as follows. Catalyzes the initial step of the lipid cycle reactions in the biosynthesis of the cell wall peptidoglycan: transfers peptidoglycan precursor phospho-MurNAc-pentapeptide from UDP-MurNAc-pentapeptide onto the lipid carrier undecaprenyl phosphate, yielding undecaprenyl-pyrophosphoryl-MurNAc-pentapeptide, known as lipid I. This is Phospho-N-acetylmuramoyl-pentapeptide-transferase from Deinococcus radiodurans (strain ATCC 13939 / DSM 20539 / JCM 16871 / CCUG 27074 / LMG 4051 / NBRC 15346 / NCIMB 9279 / VKM B-1422 / R1).